The primary structure comprises 85 residues: CRISPR-associated endoribonuclease Cas2 (85 aa).

Mg(2+) is bound at residue Asp-8.

It belongs to the CRISPR-associated endoribonuclease Cas2 protein family. In terms of assembly, homodimer, forms a heterotetramer with a Cas1 homodimer. Mg(2+) serves as cofactor.

In terms of biological role, CRISPR (clustered regularly interspaced short palindromic repeat), is an adaptive immune system that provides protection against mobile genetic elements (viruses, transposable elements and conjugative plasmids). CRISPR clusters contain sequences complementary to antecedent mobile elements and target invading nucleic acids. CRISPR clusters are transcribed and processed into CRISPR RNA (crRNA). Functions as a ssRNA-specific endoribonuclease. Involved in the integration of spacer DNA into the CRISPR cassette. The chain is CRISPR-associated endoribonuclease Cas2 from Pyrococcus furiosus (strain ATCC 43587 / DSM 3638 / JCM 8422 / Vc1).